An 87-amino-acid polypeptide reads, in one-letter code: Spermatid-specific protein S1 (87 aa).

The segment at 1–36 is disordered; that stretch reads TKSRYRNRRSRPRRRYGRRMRKTRCRRKGRRISRRP.

The protein localises to the nucleus. Its subcellular location is the chromosome. Functionally, involved in nuclear basic protein transition: histones are replaced by spermatid specific proteins which are themselves replaced by protamines in late spermatids. This chain is Spermatid-specific protein S1, found in Scyliorhinus canicula (Small-spotted catshark).